Consider the following 608-residue polypeptide: MSILTYLEFHLYYTLPVLAALCWLLKPFHSQQDNLKYKFLMLMAASTASIWDNYIVYHRAWWYCPTCVVAVIGYVPLEEYMFFIIMTLMTVAFSNFVMRWHLHTFFIRPNTSWKQTLLVRLVPVSALLAITYHAWHLTLPNKPSFYGSCILWYACPVLAILWLGAGEYILRRPVAVLLSIVIPSVYLCWADIVAISAGTWHISLRTSTGKMVVPDLPVEECLFFTLINTVLVFATCAIDRAQAILHLYKSSVQNQNPKQAISLFQHVKELAWAFCLPDQMLNNELFDDLTISWDILRKASKSFYTASAVFPSYVRQDLGVLYAFCRATDDLCDDESKSVQERRDQLDLTRQFVRDLFSQKTSAPIVIDWELYQNQLPASCISAFRAFTRLRHVLEVDPVEELLDGYKWDLERRPILDEQDLEAYSACVASSVGEMCTRVILAQDQKENDAWIIDRAREMGLVLQYVNIARDIVTDSETLGRCYLPQQWLRKEETEQIQQGNARSLGDQRLLGLSLKLVGKADAIMVRAKKGIDKLPANCQGGVRAACQVYAAIGSVLKQQKTTYPTRAHLKGSERAKIALLSVYNLYQSEDKPVALRQARKIKSFFVD.

A lycopene beta-cyclase region spans residues 1–240 (MSILTYLEFH…LVFATCAIDR (240 aa)). The next 7 membrane-spanning stretches (helical) occupy residues 3-23 (ILTY…ALCW), 37-56 (YKFL…NYIV), 80-97 (YMFF…SNFV), 117-137 (LLVR…AWHL), 150-170 (ILWY…EYIL), 175-195 (AVLL…IVAI), and 218-238 (VEEC…TCAI). Residues 247 to 608 (LYKSSVQNQN…ARKIKSFFVD (362 aa)) are phytoene synthase.

In the N-terminal section; belongs to the lycopene beta-cyclase family. It in the C-terminal section; belongs to the phytoene/squalene synthase family.

It is found in the membrane. It carries out the reaction all-trans-lycopene = gamma-carotene. The enzyme catalyses gamma-carotene = all-trans-beta-carotene. The catalysed reaction is 2 (2E,6E,10E)-geranylgeranyl diphosphate = 15-cis-phytoene + 2 diphosphate. Its pathway is carotenoid biosynthesis; beta-carotene biosynthesis. The protein operates within carotenoid biosynthesis; phytoene biosynthesis; all-trans-phytoene from geranylgeranyl diphosphate: step 1/1. In terms of biological role, bifunctional enzyme that catalyzes the reactions from geranylgeranyl diphosphate to phytoene (phytoene synthase) and lycopene to beta-carotene via the intermediate gamma-carotene (lycopene cyclase). This chain is Bifunctional lycopene cyclase/phytoene synthase, found in Blakeslea trispora (Choanephora trispora).